Consider the following 466-residue polypeptide: Argininosuccinate lyase (466 aa).

This sequence belongs to the lyase 1 family. Argininosuccinate lyase subfamily.

Its subcellular location is the cytoplasm. The catalysed reaction is 2-(N(omega)-L-arginino)succinate = fumarate + L-arginine. It participates in amino-acid biosynthesis; L-arginine biosynthesis; L-arginine from L-ornithine and carbamoyl phosphate: step 3/3. The sequence is that of Argininosuccinate lyase from Roseobacter denitrificans (strain ATCC 33942 / OCh 114) (Erythrobacter sp. (strain OCh 114)).